Consider the following 135-residue polypeptide: UPF0251 protein Hore_18270 (135 aa).

It belongs to the UPF0251 family.

In Halothermothrix orenii (strain H 168 / OCM 544 / DSM 9562), this protein is UPF0251 protein Hore_18270.